The following is a 481-amino-acid chain: Aspartyl/glutamyl-tRNA(Asn/Gln) amidotransferase subunit B (481 aa).

This sequence belongs to the GatB/GatE family. GatB subfamily. In terms of assembly, heterotrimer of A, B and C subunits.

The enzyme catalyses L-glutamyl-tRNA(Gln) + L-glutamine + ATP + H2O = L-glutaminyl-tRNA(Gln) + L-glutamate + ADP + phosphate + H(+). It catalyses the reaction L-aspartyl-tRNA(Asn) + L-glutamine + ATP + H2O = L-asparaginyl-tRNA(Asn) + L-glutamate + ADP + phosphate + 2 H(+). Its function is as follows. Allows the formation of correctly charged Asn-tRNA(Asn) or Gln-tRNA(Gln) through the transamidation of misacylated Asp-tRNA(Asn) or Glu-tRNA(Gln) in organisms which lack either or both of asparaginyl-tRNA or glutaminyl-tRNA synthetases. The reaction takes place in the presence of glutamine and ATP through an activated phospho-Asp-tRNA(Asn) or phospho-Glu-tRNA(Gln). The chain is Aspartyl/glutamyl-tRNA(Asn/Gln) amidotransferase subunit B from Pseudomonas fluorescens (strain Pf0-1).